The primary structure comprises 365 residues: Genome polyprotein (365 aa).

Disordered regions lie at residues 56–136 (VDAG…AGTT) and 334–365 (GNVG…QQHH). Residues 68–98 (GTQPPATGAAAQGGAQPPATGAAAQPPTTQG) show a composition bias toward low complexity. Over residues 105-123 (GATGGGGAQTGAGGTGSVT) the composition is skewed to gly residues.

Belongs to the potyviridae genome polyprotein family. Post-translationally, genome polyprotein of potyviruses undergoes post-translational proteolytic processing by the main proteinase NIa-pro resulting in the production of at least ten individual proteins. The P1 proteinase and the HC-pro cleave only their respective C-termini autocatalytically. 6K1 is essential for proper proteolytic separation of P3 from CI.

The protein resides in the virion. The catalysed reaction is RNA(n) + a ribonucleoside 5'-triphosphate = RNA(n+1) + diphosphate. An RNA-dependent RNA polymerase that plays an essential role in the virus replication. Functionally, involved in aphid transmission, cell-to-cell and systemis movement, encapsidation of the viral RNA and in the regulation of viral RNA amplification. This chain is Genome polyprotein, found in Eleusine (Sorghum).